The following is a 202-amino-acid chain: Putative transmembrane protein ORF202 (202 aa).

The next 5 helical transmembrane spans lie at 13–33, 40–60, 87–107, 156–176, and 177–197; these read AIAF…FHYI, VFYL…LFLG, YYPV…ISVF, YGAL…HSLS, and LTAF…DLWA.

It localises to the host membrane. This is Putative transmembrane protein ORF202 from Acidianus filamentous virus 2 (isolate Italy/Pozzuoli) (AFV-2).